A 401-amino-acid chain; its full sequence is uncharacterized protein (401 aa).

This is an uncharacterized protein from Mycobacterium tuberculosis (strain CDC 1551 / Oshkosh).